Consider the following 256-residue polypeptide: Proteasome subunit beta type-5 (256 aa).

A propeptide spans 1–55 (removed in mature form); that stretch reads CNMALADIVRLPPASEAPFAPLGAPRDLSGPPSKLAVRPWGGADLPGPGLQLLHG. The Nucleophile role is filled by Thr56.

Belongs to the peptidase T1B family. In terms of assembly, the 26S proteasome consists of a 20S proteasome core and two 19S regulatory subunits. The 20S proteasome core is a barrel-shaped complex made of 28 subunits that are arranged in four stacked rings. The two outer rings are each formed by seven alpha subunits, and the two inner rings are formed by seven beta subunits. The proteolytic activity is exerted by three beta-subunits PSMB5, PSMB6 and PSMB7. Directly interacts with POMP. Interacts with ABCB1 and TAP1.

It localises to the cytoplasm. It is found in the nucleus. It catalyses the reaction Cleavage of peptide bonds with very broad specificity.. In terms of biological role, component of the 20S core proteasome complex involved in the proteolytic degradation of most intracellular proteins. This complex plays numerous essential roles within the cell by associating with different regulatory particles. Associated with two 19S regulatory particles, forms the 26S proteasome and thus participates in the ATP-dependent degradation of ubiquitinated proteins. The 26S proteasome plays a key role in the maintenance of protein homeostasis by removing misfolded or damaged proteins that could impair cellular functions, and by removing proteins whose functions are no longer required. Associated with the PA200 or PA28, the 20S proteasome mediates ubiquitin-independent protein degradation. This type of proteolysis is required in several pathways including spermatogenesis (20S-PA200 complex) or generation of a subset of MHC class I-presented antigenic peptides (20S-PA28 complex). Within the 20S core complex, PSMB5 displays a chymotrypsin-like activity. The sequence is that of Proteasome subunit beta type-5 (PSMB5) from Gallus gallus (Chicken).